The sequence spans 231 residues: Small ribosomal subunit protein uS5 (231 aa).

Positions 1-63 are disordered; the sequence is MADLENKTVK…KSVDRANKVK (63 aa). The segment covering 29 to 60 has biased composition (basic and acidic residues); the sequence is KRTESGAKKQIWEKRSAHDSKDMPKKSVDRAN. One can recognise an S5 DRBM domain in the interval 75-138; sequence FSEKVVNISR…KDARNHLISV (64 aa).

This sequence belongs to the universal ribosomal protein uS5 family. Part of the 30S ribosomal subunit. Contacts proteins S4 and S8.

In terms of biological role, with S4 and S12 plays an important role in translational accuracy. Its function is as follows. Located at the back of the 30S subunit body where it stabilizes the conformation of the head with respect to the body. The chain is Small ribosomal subunit protein uS5 from Mycoplasmopsis agalactiae (strain NCTC 10123 / CIP 59.7 / PG2) (Mycoplasma agalactiae).